Consider the following 161-residue polypeptide: MDFRIGQGYDVHQLVEGRPLIIGGVTIPYERGLLGHSDADVLLHAITDALFGAAALGDIGRHFSDTDAAFKGADSRVLLRACAERVKAAGFTIQNVDSTVIAQAPKLAPHIDGMRANIAADLGLPLERVNVKAKTNEKLGYLGRGEGIEAQAAALLVKQGG.

A divalent metal cation-binding residues include aspartate 10 and histidine 12. 4-CDP-2-C-methyl-D-erythritol 2-phosphate is bound by residues 10 to 12 (DVH) and 36 to 37 (HS). Histidine 44 serves as a coordination point for a divalent metal cation. Residues 58-60 (DIG), 63-67 (FSDTD), and arginine 144 contribute to the 4-CDP-2-C-methyl-D-erythritol 2-phosphate site.

The protein belongs to the IspF family. Homotrimer. Requires a divalent metal cation as cofactor.

It catalyses the reaction 4-CDP-2-C-methyl-D-erythritol 2-phosphate = 2-C-methyl-D-erythritol 2,4-cyclic diphosphate + CMP. It functions in the pathway isoprenoid biosynthesis; isopentenyl diphosphate biosynthesis via DXP pathway; isopentenyl diphosphate from 1-deoxy-D-xylulose 5-phosphate: step 4/6. In terms of biological role, involved in the biosynthesis of isopentenyl diphosphate (IPP) and dimethylallyl diphosphate (DMAPP), two major building blocks of isoprenoid compounds. Catalyzes the conversion of 4-diphosphocytidyl-2-C-methyl-D-erythritol 2-phosphate (CDP-ME2P) to 2-C-methyl-D-erythritol 2,4-cyclodiphosphate (ME-CPP) with a corresponding release of cytidine 5-monophosphate (CMP). This is 2-C-methyl-D-erythritol 2,4-cyclodiphosphate synthase from Burkholderia cenocepacia (strain HI2424).